Consider the following 192-residue polypeptide: MHLLMSLFGVLAVMQQQLAVRAAAYIPDSDRNTKTLQNDLQVERDGNYRYAYETSNGISATQEGLGGVSVQGGSSYTSPEGSVISVSYVADETGYHPVGDHIPKVPDYILRALEYIRAHPYQVKDYYTGELKTVAHDAAAFNVYTRNIQDQTTPRSRPSSTPKTIYLTHPPTLSDAPTRRPLRQRQNDSRRR.

Residues Met1 to Gln15 form the signal peptide. The Chitin-binding type R&amp;R domain maps to Asp45–Pro106. A compositionally biased stretch (polar residues) spans Gln149–Lys163. The disordered stretch occupies residues Gln149 to Arg192.

Its function is as follows. Component of the cuticle of the pupa of fruit fly. In Drosophila pseudoobscura pseudoobscura (Fruit fly), this protein is Pupal cuticle protein (Pcp).